A 1068-amino-acid polypeptide reads, in one-letter code: Disheveled-associated activator of morphogenesis 2 (1068 aa).

The region spanning 40-416 (SPIPNAEELN…QIVLQDERGV (377 aa)) is the GBD/FH3 domain. Residues 434–516 (MLINENEVKQ…LVAQLSELST (83 aa)) are a coiled coil. A disordered region spans residues 514-586 (LSTGPVSSPP…MGLPLPQDPY (73 aa)). Residues 518-594 (PVSSPPPPGG…PYPSSDVPLR (77 aa)) form the FH1 domain. Residues 540 to 572 (LPPPPPPLPFACCPPPPPPPLPPGGPPTPPGAP) are compositionally biased toward pro residues. One can recognise an FH2 domain in the interval 595–994 (KKRVPQPSHP…EERRARMEAM (400 aa)). At Ser-1015 the chain carries Phosphoserine. The 33-residue stretch at 1016–1048 (SLEEGGEFDDLVSALRSGEVFDKDLCKLKRSRK) folds into the DAD domain.

The protein belongs to the formin homology family. In terms of assembly, interacts with DVL3. Interacts with INF2. As to expression, expressed in most tissues examined. Expressed in kidney glomeruli.

Its function is as follows. Key regulator of the Wnt signaling pathway, which is required for various processes during development, such as dorsal patterning, determination of left/right symmetry or myelination in the central nervous system. Acts downstream of Wnt ligands and upstream of beta-catenin (CTNNB1). Required for canonical Wnt signaling pathway during patterning in the dorsal spinal cord by promoting the aggregation of Disheveled (Dvl) complexes, thereby clustering and formation of Wnt receptor signalosomes and potentiating Wnt activity. During dorsal patterning of the spinal cord, inhibits oligodendrocytes differentiation via interaction with PIP5K1A. Also regulates non-canonical Wnt signaling pathway. Acts downstream of PITX2 in the developing gut and is required for left/right asymmetry within dorsal mesentery: affects mesenchymal condensation by lengthening cadherin-based junctions through WNT5A and non-canonical Wnt signaling, inducing polarized condensation in the left dorsal mesentery necessary to initiate gut rotation. Together with DAAM1, required for myocardial maturation and sarcomere assembly. Is a regulator of actin nucleation and elongation, filopodia formation and podocyte migration. The sequence is that of Disheveled-associated activator of morphogenesis 2 from Homo sapiens (Human).